Reading from the N-terminus, the 213-residue chain is Maleylacetoacetate isomerase (213 aa).

Positions 3–84 constitute a GST N-terminal domain; the sequence is NETVLYDYWR…YLAETRDGTG (82 aa). Positions 89–213 constitute a GST C-terminal domain; it reads HPIDRQRVRA…QRAHPDRAKP (125 aa).

The protein belongs to the GST superfamily. Zeta family.

The enzyme catalyses 4-maleylacetoacetate = 4-fumarylacetoacetate. The protein operates within amino-acid degradation; L-phenylalanine degradation; acetoacetate and fumarate from L-phenylalanine: step 5/6. In Rhizobium meliloti (strain 1021) (Ensifer meliloti), this protein is Maleylacetoacetate isomerase (maiA).